A 277-amino-acid polypeptide reads, in one-letter code: Phosphate import ATP-binding protein PstB (277 aa).

The ABC transporter domain maps to 31-272 (IEVPGLSLFY…PAKKQTEDYI (242 aa)). 63-70 (GPSGCGKS) is a binding site for ATP.

It belongs to the ABC transporter superfamily. Phosphate importer (TC 3.A.1.7) family. As to quaternary structure, the complex is composed of two ATP-binding proteins (PstB), two transmembrane proteins (PstC and PstA) and a solute-binding protein (PstS).

It localises to the cell inner membrane. The enzyme catalyses phosphate(out) + ATP + H2O = ADP + 2 phosphate(in) + H(+). In terms of biological role, part of the ABC transporter complex PstSACB involved in phosphate import. Responsible for energy coupling to the transport system. The protein is Phosphate import ATP-binding protein PstB of Pseudomonas fluorescens (strain Pf0-1).